The sequence spans 445 residues: Methylenetetrahydrofolate--tRNA-(uracil-5-)-methyltransferase TrmFO (445 aa).

Residue 10–15 (GGGLSG) participates in FAD binding.

Belongs to the MnmG family. TrmFO subfamily. It depends on FAD as a cofactor.

The protein resides in the cytoplasm. It catalyses the reaction uridine(54) in tRNA + (6R)-5,10-methylene-5,6,7,8-tetrahydrofolate + NADH + H(+) = 5-methyluridine(54) in tRNA + (6S)-5,6,7,8-tetrahydrofolate + NAD(+). The catalysed reaction is uridine(54) in tRNA + (6R)-5,10-methylene-5,6,7,8-tetrahydrofolate + NADPH + H(+) = 5-methyluridine(54) in tRNA + (6S)-5,6,7,8-tetrahydrofolate + NADP(+). Functionally, catalyzes the folate-dependent formation of 5-methyl-uridine at position 54 (M-5-U54) in all tRNAs. The sequence is that of Methylenetetrahydrofolate--tRNA-(uracil-5-)-methyltransferase TrmFO from Lawsonia intracellularis (strain PHE/MN1-00).